Consider the following 446-residue polypeptide: Corrinoid/iron-sulfur protein large subunit (446 aa).

One can recognise a 4Fe-4S domain in the interval 2–59; sequence PLTGLEIYKQLPKKNCGECGTPTCLAFAMNLASGKASLDSCPYVSDAAREALDAAAAP. Residues cysteine 17, cysteine 20, cysteine 25, and cysteine 42 each coordinate [4Fe-4S] cluster. Residues threonine 340, threonine 346, 370 to 373, and alanine 433 contribute to the 5-methoxybenzimidazolylcob(I)amide site; that span reads GLSV.

In terms of assembly, heterohexamer composed of 2 subunits of AcsC, 2 subunits of AcsD and 2 subunits of AcsE. [4Fe-4S] cluster is required as a cofactor.

Functionally, acts as a methyl group carrier in the anaerobic acetyl-CoA pathway (Wood-Ljungdahl pathway) of carbon monoxide and carbon dioxide fixation. Binds the corrinoid 5-methoxybenzimidazolylcobamide which is then methylated by the AcsE subunit. This Moorella thermoacetica (Clostridium thermoaceticum) protein is Corrinoid/iron-sulfur protein large subunit (acsC).